The primary structure comprises 257 residues: Trans-aconitate 2-methyltransferase (257 aa).

It belongs to the methyltransferase superfamily. Tam family.

Its subcellular location is the cytoplasm. The catalysed reaction is trans-aconitate + S-adenosyl-L-methionine = (E)-3-(methoxycarbonyl)pent-2-enedioate + S-adenosyl-L-homocysteine. In terms of biological role, catalyzes the S-adenosylmethionine monomethyl esterification of trans-aconitate. The polypeptide is Trans-aconitate 2-methyltransferase (Sinorhizobium medicae (strain WSM419) (Ensifer medicae)).